The following is a 282-amino-acid chain: NADPH-dependent 7-cyano-7-deazaguanine reductase (282 aa).

90 to 92 contacts substrate; that stretch reads IES. 92–93 serves as a coordination point for NADPH; sequence SK. Residue Cys190 is the Thioimide intermediate of the active site. Residue Asp197 is the Proton donor of the active site. Residue 229-230 coordinates substrate; it reads HE. NADPH is bound at residue 258-259; that stretch reads RG.

This sequence belongs to the GTP cyclohydrolase I family. QueF type 2 subfamily. As to quaternary structure, homodimer.

Its subcellular location is the cytoplasm. The catalysed reaction is 7-aminomethyl-7-carbaguanine + 2 NADP(+) = 7-cyano-7-deazaguanine + 2 NADPH + 3 H(+). It participates in tRNA modification; tRNA-queuosine biosynthesis. In terms of biological role, catalyzes the NADPH-dependent reduction of 7-cyano-7-deazaguanine (preQ0) to 7-aminomethyl-7-deazaguanine (preQ1). The polypeptide is NADPH-dependent 7-cyano-7-deazaguanine reductase (Aeromonas salmonicida (strain A449)).